A 290-amino-acid polypeptide reads, in one-letter code: Xyloglucan endotransglycosylase/hydrolase protein 8 (290 aa).

Positions 1–25 are cleaved as a signal peptide; sequence MAKHLALSVAAAVAVSWLAASSAAA. A GH16 domain is found at 26–218; it reads AGFYEKFDVV…WSGAPFVVSY (193 aa). Glu-106 acts as the Nucleophile in catalysis. Glu-110 serves as the catalytic Proton donor. A xyloglucan-binding site is contributed by Glu-110. Asn-114 carries an N-linked (GlcNAc...) asparagine glycan. Xyloglucan is bound by residues 123 to 125, 133 to 135, and 197 to 198; these read NTN, KKE, and YW. Intrachain disulfides connect Cys-226–Cys-240 and Cys-273–Cys-287. Residue Arg-278 participates in xyloglucan binding.

The protein belongs to the glycosyl hydrolase 16 family. XTH group 2 subfamily. Contains at least one intrachain disulfide bond essential for its enzymatic activity. In terms of tissue distribution, transcript strongly detected in leaf sheaths. Weakly or not expressed in leaf blades, roots and calli. Accumulation of transcript detected in shoot apex meristem, vascular tissues, young leaves, vascular bundles of leaf sheaths, and peripheral cylinder of the vascular bundles and fibers in the nodal region.

It localises to the secreted. It is found in the cell wall. The protein localises to the extracellular space. The protein resides in the apoplast. It catalyses the reaction breaks a beta-(1-&gt;4) bond in the backbone of a xyloglucan and transfers the xyloglucanyl segment on to O-4 of the non-reducing terminal glucose residue of an acceptor, which can be a xyloglucan or an oligosaccharide of xyloglucan.. Its function is as follows. Catalyzes xyloglucan endohydrolysis (XEH) and/or endotransglycosylation (XET). Cleaves and religates xyloglucan polymers, an essential constituent of the primary cell wall, and thereby participates in cell wall construction of growing tissues. May promote elongation of three internodes (II, III and IV) and may be involved in cell elongation processes. This Oryza sativa subsp. japonica (Rice) protein is Xyloglucan endotransglycosylase/hydrolase protein 8 (XTH8).